The chain runs to 274 residues: Formamidopyrimidine-DNA glycosylase (274 aa).

The Schiff-base intermediate with DNA role is filled by Pro-2. Glu-3 serves as the catalytic Proton donor. The Proton donor; for beta-elimination activity role is filled by Lys-57. The DNA site is built by His-90, Arg-109, and Lys-150. The FPG-type zinc finger occupies Phe-235–His-269. Residue Arg-259 is the Proton donor; for delta-elimination activity of the active site.

Belongs to the FPG family. As to quaternary structure, monomer. The cofactor is Zn(2+).

It catalyses the reaction Hydrolysis of DNA containing ring-opened 7-methylguanine residues, releasing 2,6-diamino-4-hydroxy-5-(N-methyl)formamidopyrimidine.. The catalysed reaction is 2'-deoxyribonucleotide-(2'-deoxyribose 5'-phosphate)-2'-deoxyribonucleotide-DNA = a 3'-end 2'-deoxyribonucleotide-(2,3-dehydro-2,3-deoxyribose 5'-phosphate)-DNA + a 5'-end 5'-phospho-2'-deoxyribonucleoside-DNA + H(+). Its function is as follows. Involved in base excision repair of DNA damaged by oxidation or by mutagenic agents. Acts as a DNA glycosylase that recognizes and removes damaged bases. Has a preference for oxidized purines, such as 7,8-dihydro-8-oxoguanine (8-oxoG). Has AP (apurinic/apyrimidinic) lyase activity and introduces nicks in the DNA strand. Cleaves the DNA backbone by beta-delta elimination to generate a single-strand break at the site of the removed base with both 3'- and 5'-phosphates. This Proteus mirabilis (strain HI4320) protein is Formamidopyrimidine-DNA glycosylase.